A 347-amino-acid chain; its full sequence is MTEALVVDDSHFMRTVISDILEDGGVDVVGTAENGARALDAVTDVQPDVITMDVEMPEMDGIEATAEIMREQPTPILMVSALTTEDADATLEAMEKGAIDTFAKPGGTISTELSGHSEELVAAVERVASADPTAGHDVEMEPASPPDATTSEYADNPTLLIGASTGGPNVVESILASLPAEADFRVLIVQHMPDQFTSRFADRLDAASQYDITEAEDGSRIGGGEGLVARGDYHMRVSGYSNGRLRVRLDQSERLHSVRPAIDVTFKSAAERVTDPLVSVVLTGMGSDGADGVRAVKDAGGATLAQNEATSAVFGIPERAIETGCVDDVLPVDQLTEAIADSIRRTT.

The region spanning 3 to 119 (EALVVDDSHF…STELSGHSEE (117 aa)) is the Response regulatory domain. The residue at position 53 (D53) is a 4-aspartylphosphate. Residues 132–154 (PTAGHDVEMEPASPPDATTSEYA) form a disordered region. The 195-residue stretch at 152–346 (EYADNPTLLI…EAIADSIRRT (195 aa)) folds into the CheB-type methylesterase domain. Catalysis depends on residues S164, H191, and D288.

This sequence belongs to the CheB family. Post-translationally, phosphorylated by CheA. Phosphorylation of the N-terminal regulatory domain activates the methylesterase activity.

It localises to the cytoplasm. The enzyme catalyses [protein]-L-glutamate 5-O-methyl ester + H2O = L-glutamyl-[protein] + methanol + H(+). It catalyses the reaction L-glutaminyl-[protein] + H2O = L-glutamyl-[protein] + NH4(+). In terms of biological role, involved in the modulation of the chemotaxis system; catalyzes the demethylation of specific methylglutamate residues introduced into the Htr transducer proteins (methyl-accepting chemotaxis proteins) by CheR. Also required for Htr deamidations, at least at a specific glutamine-glutamate pair in HTR-II and a specific aspartate-glutamine pair in Htr4. The sequence is that of Protein-glutamate methylesterase/protein-glutamine glutaminase from Halobacterium salinarum (strain ATCC 29341 / DSM 671 / R1).